Here is an 804-residue protein sequence, read N- to C-terminus: General transcription and DNA repair factor IIH helicase/translocase subunit XPB (804 aa).

Disordered regions lie at residues 1–61 and 220–255; these read MSLK…NSNE and QSSK…KSSS. A compositionally biased stretch (acidic residues) spans 14–36; it reads PDEDLEEYSDYSDVDNYGEEDDD. Composition is skewed to low complexity over residues 47–60 and 220–229; these read NNNK…TNSN and QSSKQKSSKP. Over residues 236–255 the composition is skewed to basic and acidic residues; sequence EDKKDITNDSSKETAEKSSS. One can recognise a Helicase ATP-binding domain in the interval 335–497; that stretch reads MFGNGRARSG…DLNFLIGPKM (163 aa). ATP is bound at residue 348–355; the sequence is LPCGAGKT. A DEVH box motif is present at residues 450–453; the sequence is DEVH. The Helicase C-terminal domain occupies 551–705; the sequence is QACQFLIDYH…KVITNLKGME (155 aa). 2 disordered regions span residues 736–761 and 782–804; these read DDGE…SSGS and KQLK…TKRR. The segment covering 784 to 793 has biased composition (basic and acidic residues); it reads LKKDSKEHHA. The span at 794 to 804 shows a compositional bias: basic residues; it reads LFRKHLYTKRR.

It belongs to the helicase family. RAD25/XPB subfamily. As to quaternary structure, component of the 7-subunit TFIIH core complex composed of XPB/ptr8, XPD/rad15, ssl1, tfb1, tfb2, tfb4 and tfb5, which is active in NER. The core complex associates with the 3-subunit CTD-kinase module TFIIK composed of mcs2/cyclin H, mcs6/cdk7 and pmh1/tfb3 to form the 10-subunit holoenzyme (holo-TFIIH) active in transcription.

It is found in the nucleus. It catalyses the reaction Couples ATP hydrolysis with the unwinding of duplex DNA by translocating in the 3'-5' direction.. The catalysed reaction is ATP + H2O = ADP + phosphate + H(+). Functionally, probable ATP-dependent 3'-5' DNA helicase/translocase. Binds dsDNA rather than ssDNA, unzipping it in a translocase rather than classical helicase activity. Component of the general transcription and DNA repair factor IIH (TFIIH) core complex. When complexed to CDK-activating kinase (CAK), involved in RNA transcription by RNA polymerase II. Also involved in transcription-coupled nucleotide excision repair (NER) of damaged DNA. In NER, TFIIH acts by opening DNA around the lesion to allow the excision of the damaged oligonucleotide and its replacement by a new DNA fragment. The ATPase activity of XPB/ptr8, but not its helicase activity, is required for DNA opening. In transcription, TFIIH has an essential role in transcription initiation. When the pre-initiation complex (PIC) has been established, TFIIH is required for promoter opening and promoter escape. The ATP-dependent helicase activity of XPB/ptr8 is required for promoter escape but not for promoter opening. Plays a role in mRNA export. The sequence is that of General transcription and DNA repair factor IIH helicase/translocase subunit XPB from Schizosaccharomyces pombe (strain 972 / ATCC 24843) (Fission yeast).